A 152-amino-acid polypeptide reads, in one-letter code: Transcriptional regulator MraZ (152 aa).

SpoVT-AbrB domains follow at residues 5 to 52 and 81 to 124; these read ASAV…PLNQ and ATEC…SESE.

The protein belongs to the MraZ family. As to quaternary structure, forms oligomers.

The protein localises to the cytoplasm. It is found in the nucleoid. This chain is Transcriptional regulator MraZ, found in Histophilus somni (strain 2336) (Haemophilus somnus).